The following is a 333-amino-acid chain: Biotin synthase (333 aa).

Residues 51–281 (HFGNQVSLCG…DVHITICGGR (231 aa)) enclose the Radical SAM core domain. Positions 69, 73, and 76 each coordinate [4Fe-4S] cluster. Residue C206 coordinates [2Fe-2S] cluster.

This sequence belongs to the radical SAM superfamily. Biotin synthase family. As to quaternary structure, homodimer. It depends on [4Fe-4S] cluster as a cofactor. Requires [2Fe-2S] cluster as cofactor.

It carries out the reaction (4R,5S)-dethiobiotin + (sulfur carrier)-SH + 2 reduced [2Fe-2S]-[ferredoxin] + 2 S-adenosyl-L-methionine = (sulfur carrier)-H + biotin + 2 5'-deoxyadenosine + 2 L-methionine + 2 oxidized [2Fe-2S]-[ferredoxin]. It participates in cofactor biosynthesis; biotin biosynthesis; biotin from 7,8-diaminononanoate: step 2/2. Its function is as follows. Catalyzes the conversion of dethiobiotin (DTB) to biotin by the insertion of a sulfur atom into dethiobiotin via a radical-based mechanism. The sequence is that of Biotin synthase from Trichlorobacter lovleyi (strain ATCC BAA-1151 / DSM 17278 / SZ) (Geobacter lovleyi).